The chain runs to 366 residues: Homoserine O-acetyltransferase (366 aa).

Residues 47–349 (NAILICHALS…SGEGHDSFLL (303 aa)) enclose the AB hydrolase-1 domain. Ser153 functions as the Nucleophile in the catalytic mechanism. Position 221 (Arg221) interacts with substrate. Active-site residues include Asp311 and His344. Residue Asp345 coordinates substrate.

It belongs to the AB hydrolase superfamily. MetX family. In terms of assembly, homodimer.

The protein localises to the cytoplasm. The enzyme catalyses L-homoserine + acetyl-CoA = O-acetyl-L-homoserine + CoA. It participates in amino-acid biosynthesis; L-methionine biosynthesis via de novo pathway; O-acetyl-L-homoserine from L-homoserine: step 1/1. In terms of biological role, transfers an acetyl group from acetyl-CoA to L-homoserine, forming acetyl-L-homoserine. This is Homoserine O-acetyltransferase from Leptospira interrogans serogroup Icterohaemorrhagiae serovar copenhageni (strain Fiocruz L1-130).